The primary structure comprises 177 residues: uncharacterized protein (177 aa).

Residues 122–177 (LPFTRNGSGQQSNKLRDPKKGRTHKPKPSEKHKKNKTGKKGAQEKTHRSRSSRKGN) are disordered. Composition is skewed to basic residues over residues 142–160 (GRTH…KTGK) and 168–177 (HRSRSSRKGN).

This is an uncharacterized protein from Saccharomyces cerevisiae (strain ATCC 204508 / S288c) (Baker's yeast).